Consider the following 251-residue polypeptide: Large ribosomal subunit protein uL3 (251 aa).

Disordered regions lie at residues 140-162 and 229-251; these read SHRSIGSTGGRQDPGKTFKNKKM and AAPAGAVQAAQAAPEAPAAEENA. Position 151 is an N5-methylglutamine (Gln151).

The protein belongs to the universal ribosomal protein uL3 family. In terms of assembly, part of the 50S ribosomal subunit. Forms a cluster with proteins L14 and L19. In terms of processing, methylated by PrmB.

In terms of biological role, one of the primary rRNA binding proteins, it binds directly near the 3'-end of the 23S rRNA, where it nucleates assembly of the 50S subunit. This Methylobacterium nodulans (strain LMG 21967 / CNCM I-2342 / ORS 2060) protein is Large ribosomal subunit protein uL3.